We begin with the raw amino-acid sequence, 106 residues long: MNDSEFHRLADQLWLTIEERLDDWDGDSDIDCEINGGVLTITFENGSKIIINRQEPLHQVWLATRQGGYHFDLKGDEWICDRSGETFWDLLEQAATQQAGETVSFR.

The protein belongs to the frataxin family.

In terms of biological role, involved in iron-sulfur (Fe-S) cluster assembly. May act as a regulator of Fe-S biogenesis. The sequence is that of Iron-sulfur cluster assembly protein CyaY from Escherichia coli O7:K1 (strain IAI39 / ExPEC).